The following is a 312-amino-acid chain: Acetyl-coenzyme A carboxylase carboxyl transferase subunit alpha (312 aa).

The region spanning 36–286 (RLDKEVKSIY…KEYFLDALRT (251 aa)) is the CoA carboxyltransferase C-terminal domain.

Belongs to the AccA family. In terms of assembly, acetyl-CoA carboxylase is a heterohexamer composed of biotin carboxyl carrier protein (AccB), biotin carboxylase (AccC) and two subunits each of ACCase subunit alpha (AccA) and ACCase subunit beta (AccD).

It localises to the cytoplasm. The enzyme catalyses N(6)-carboxybiotinyl-L-lysyl-[protein] + acetyl-CoA = N(6)-biotinyl-L-lysyl-[protein] + malonyl-CoA. Its pathway is lipid metabolism; malonyl-CoA biosynthesis; malonyl-CoA from acetyl-CoA: step 1/1. In terms of biological role, component of the acetyl coenzyme A carboxylase (ACC) complex. First, biotin carboxylase catalyzes the carboxylation of biotin on its carrier protein (BCCP) and then the CO(2) group is transferred by the carboxyltransferase to acetyl-CoA to form malonyl-CoA. The sequence is that of Acetyl-coenzyme A carboxylase carboxyl transferase subunit alpha from Helicobacter pylori (strain G27).